The sequence spans 370 residues: Queuine tRNA-ribosyltransferase (370 aa).

The active-site Proton acceptor is the Asp-89. Residues 89-93 (DSGGF), Asp-143, Gln-185, and Gly-212 contribute to the substrate site. Residues 243-249 (GVGKPED) form an RNA binding region. The active-site Nucleophile is Asp-262. The interval 267–271 (TRNAR) is RNA binding; important for wobble base 34 recognition. 4 residues coordinate Zn(2+): Cys-300, Cys-302, Cys-305, and His-331.

This sequence belongs to the queuine tRNA-ribosyltransferase family. In terms of assembly, homodimer. Within each dimer, one monomer is responsible for RNA recognition and catalysis, while the other monomer binds to the replacement base PreQ1. Requires Zn(2+) as cofactor.

The catalysed reaction is 7-aminomethyl-7-carbaguanine + guanosine(34) in tRNA = 7-aminomethyl-7-carbaguanosine(34) in tRNA + guanine. The protein operates within tRNA modification; tRNA-queuosine biosynthesis. Functionally, catalyzes the base-exchange of a guanine (G) residue with the queuine precursor 7-aminomethyl-7-deazaguanine (PreQ1) at position 34 (anticodon wobble position) in tRNAs with GU(N) anticodons (tRNA-Asp, -Asn, -His and -Tyr). Catalysis occurs through a double-displacement mechanism. The nucleophile active site attacks the C1' of nucleotide 34 to detach the guanine base from the RNA, forming a covalent enzyme-RNA intermediate. The proton acceptor active site deprotonates the incoming PreQ1, allowing a nucleophilic attack on the C1' of the ribose to form the product. After dissociation, two additional enzymatic reactions on the tRNA convert PreQ1 to queuine (Q), resulting in the hypermodified nucleoside queuosine (7-(((4,5-cis-dihydroxy-2-cyclopenten-1-yl)amino)methyl)-7-deazaguanosine). In Hydrogenovibrio crunogenus (strain DSM 25203 / XCL-2) (Thiomicrospira crunogena), this protein is Queuine tRNA-ribosyltransferase.